Reading from the N-terminus, the 286-residue chain is Cbb3-type cytochrome c oxidase subunit CcoP (286 aa).

The next 2 membrane-spanning stretches (helical) occupy residues 11-31 and 62-82; these read FGLI…SSLI and VGWI…FFFG. Cytochrome c domains are found at residues 116 to 195 and 205 to 286; these read ELVD…MAEL and QLID…LSNR. Heme c-binding residues include C129, C132, H133, M174, C219, C222, H223, and M264.

The protein belongs to the CcoP / FixP family. As to quaternary structure, component of the cbb3-type cytochrome c oxidase at least composed of CcoN, CcoO, CcoQ and CcoP. It depends on heme c as a cofactor.

The protein localises to the cell inner membrane. Its pathway is energy metabolism; oxidative phosphorylation. Functionally, C-type cytochrome. Part of the cbb3-type cytochrome c oxidase complex. CcoP subunit is required for transferring electrons from donor cytochrome c via its heme groups to CcoO subunit. From there, electrons are shuttled to the catalytic binuclear center of CcoN subunit where oxygen reduction takes place. The complex also functions as a proton pump. This is Cbb3-type cytochrome c oxidase subunit CcoP from Helicobacter pylori (strain ATCC 700392 / 26695) (Campylobacter pylori).